Here is a 164-residue protein sequence, read N- to C-terminus: DNA-directed RNA polymerase 19 kDa subunit (164 aa).

A compositionally biased stretch (acidic residues) spans 1–35 (MADTDDIIDYESDDLTEYEDDDEEEEDGESLETSD). Residues 1-39 (MADTDDIIDYESDDLTEYEDDDEEEEDGESLETSDIDPK) form a disordered region.

Belongs to the poxviridae DNA-directed RNA polymerase 19 kDa subunit family. In terms of assembly, the DNA-dependent RNA polymerase used for intermediate and late genes expression consists of eight subunits Rpo30/OPG66, Rpo7/OPG90, Rpo22/OPG103, Rpo147/OPG105, Rpo18/OPG119, Rpo19/OPG131, Rpo132/OPG151 and Rpo35/OPG156. The same holoenzyme, with the addition of the transcription-specificity factor OPG109, is used for early gene expression.

Its subcellular location is the virion. The enzyme catalyses RNA(n) + a ribonucleoside 5'-triphosphate = RNA(n+1) + diphosphate. Its function is as follows. Part of the DNA-dependent RNA polymerase which catalyzes the transcription of viral DNA into RNA using the four ribonucleoside triphosphates as substrates. Responsible for the transcription of early, intermediate and late genes. DNA-dependent RNA polymerase associates with the early transcription factor (ETF), itself composed of OPG118 and OPG133, thereby allowing the early genes transcription. Late transcription, and probably also intermediate transcription, require newly synthesized RNA polymerase. The polypeptide is DNA-directed RNA polymerase 19 kDa subunit (OPG131) (Variola virus (isolate Human/India/Ind3/1967) (VARV)).